The sequence spans 400 residues: Malonyl CoA-acyl carrier protein transacylase (400 aa).

Residues S92 and H201 contribute to the active site.

The protein belongs to the FabD family.

It catalyses the reaction holo-[ACP] + malonyl-CoA = malonyl-[ACP] + CoA. In terms of biological role, is involved in the mycosubtilin synthetase assembly, by catalyzing the transfer of malonyl groups to a specific acyl-carrier-protein domain on MycA. This is Malonyl CoA-acyl carrier protein transacylase (fenF) from Bacillus subtilis.